The following is a 357-amino-acid chain: MPPSLSHLFLLSTFASLALCSFYCKNPGYPCLNGGTCLYNGECNCTSGFRGFNCGLDSSTISAACTVECHNKGICFNGDKCYCTKDYMGPTCQQAYDFADCNKSSMKIKAYRPTEFNGEIFLMQSMFGCKLTEVTSTIPGYKQYELDVPHDSTGPCKLKKTIDATTGDVHFEVNVSTIHHAGQFGMYDGLKTVSCHYSSRDQAIVKDVTNHELLVSVTTSDGNTQNIQEIQTNDVIHLTFNPVNLPGGYKGVKILDLEMYSVQWNEVNSILLLKDQCMTQKADELGYSVSNEVDGYSGRAILKAIPLFENVQASVYFNYRLRFCRNRCKIKSCPSQSPKPMPMGEIFKHQGQGIRIV.

An N-terminal signal peptide occupies residues 1-20 (MPPSLSHLFLLSTFASLALC). 2 consecutive EGF-like domains span residues 21-55 (SFYCKNPGYPCLNGGTCLYNGECNCTSGFRGFNCG) and 61-93 (ISAACTVECHNKGICFNGDKCYCTKDYMGPTCQ). 6 disulfides stabilise this stretch: Cys24/Cys37, Cys31/Cys43, Cys45/Cys54, Cys65/Cys75, Cys69/Cys81, and Cys83/Cys92.

Prismatic layer of shell (at protein level). Expressed primarily in the mantle with highest level in the mantle edge and lower level in the mantle pallium.

It is found in the secreted. This is EGF-like domain-containing protein 2 from Pinctada maxima (Silver-lipped pearl oyster).